The primary structure comprises 131 residues: ATP synthase lipid-binding protein, mitochondrial (131 aa).

The N-terminal 56 residues, 1 to 56 (MLSAARLIAPAARSAIFSNAAVVRPLAAVSTQTQLVPAAPAQLSAVRSFQTTSVTK), are a transit peptide targeting the mitochondrion. Residues 72–92 (VGVAGSGAGIGTVFGSLIIGY) form a helical membrane-spanning segment. Residue Lys99 is modified to N6,N6,N6-trimethyllysine. A helical transmembrane segment spans residues 107 to 127 (ILGFALSEAMGLFCLMMAFLL).

It belongs to the ATPase C chain family. As to quaternary structure, F-type ATPases have 2 components, CF(1) - the catalytic core - and CF(0) - the membrane proton channel. CF(1) has five subunits: alpha(3), beta(3), gamma(1), delta(1), epsilon(1). CF(0) has three main subunits: a, b and c. In terms of processing, trimethylated by ATPSCKMT at Lys-99. Methylation may be required for proper incorporation of the C subunit into the ATP synthase complex and mitochondrial respiration.

The protein localises to the mitochondrion membrane. In terms of biological role, mitochondrial membrane ATP synthase (F(1)F(0) ATP synthase or Complex V) produces ATP from ADP in the presence of a proton gradient across the membrane which is generated by electron transport complexes of the respiratory chain. F-type ATPases consist of two structural domains, F(1) - containing the extramembraneous catalytic core and F(0) - containing the membrane proton channel, linked together by a central stalk and a peripheral stalk. During catalysis, ATP synthesis in the catalytic domain of F(1) is coupled via a rotary mechanism of the central stalk subunits to proton translocation. Part of the complex F(0) domain. A homomeric c-ring of probably 10 subunits is part of the complex rotary element. This is ATP synthase lipid-binding protein, mitochondrial from Manduca sexta (Tobacco hawkmoth).